Here is a 208-residue protein sequence, read N- to C-terminus: CASP-like protein 2A1 (208 aa).

Over 1–36 (MSKMAEQKAAAVDGLGGAGAADAAPAGEAAAARVRP) the chain is Cytoplasmic. The chain crosses the membrane as a helical span at residues 37-57 (VETLLRAAPLGLCVAAMTVML). Residues 58–78 (RDQQSNEYGTVAYSDLGGFKY) are Extracellular-facing. A helical membrane pass occupies residues 79–99 (LVYANGLCAAYSLVSAFYTAV). The Cytoplasmic segment spans residues 100 to 108 (PRPATVSRS). A helical membrane pass occupies residues 109-129 (WVVFLLDQVFTYLILAAGAAA). Residues 130-161 (AELLYLAYNGDKEVTWSEACGVFGSFCRQART) lie on the Extracellular side of the membrane. Residues 162 to 182 (SVAITFGTVLCFILLSLISSY) traverse the membrane as a helical segment. The Cytoplasmic segment spans residues 183 to 208 (RLFSAYEAPPSSALGSKGVEIAAYPR).

Belongs to the Casparian strip membrane proteins (CASP) family. As to quaternary structure, homodimer and heterodimers.

The protein localises to the cell membrane. In Sorghum bicolor (Sorghum), this protein is CASP-like protein 2A1.